The primary structure comprises 484 residues: Cobyric acid synthase (484 aa).

The 188-residue stretch at 251-438 folds into the GATase cobBQ-type domain; sequence ALKIAVPVLP…LHGLFGSDAY (188 aa). Cys-333 acts as the Nucleophile in catalysis. His-430 is an active-site residue.

The protein belongs to the CobB/CobQ family. CobQ subfamily.

Its pathway is cofactor biosynthesis; adenosylcobalamin biosynthesis. Its function is as follows. Catalyzes amidations at positions B, D, E, and G on adenosylcobyrinic A,C-diamide. NH(2) groups are provided by glutamine, and one molecule of ATP is hydrogenolyzed for each amidation. The protein is Cobyric acid synthase of Rhizobium leguminosarum bv. trifolii (strain WSM2304).